The following is a 263-amino-acid chain: MTDIRLYMLQSGTLKCKVHNIKMNQGNGADYEIPVPFFLITHPAGHTVIDGGNAIEVATDPRGHWGGICDVYWPVLDKDQGCVDQIKALGFDPADVKYVVQSHLHLDHTGAIGRFPNATHIVQRSEYEYAFTPDWFAGGGYIRKDFDKPGLKWQFLNGAQDDYYDVYGDGTLTTIFTPGHAPGHQSFLVRLPNSKPLLLTIDAAYTLDHWEEKALPGFLASTVDTVRSVQKLRTYAEKHDATVVTGHDPDAWANFKKAPEFYA.

The Zn(2+) site is built by H103, H105, D107, H108, H180, D202, and H247.

Belongs to the metallo-beta-lactamase superfamily. Requires Zn(2+) as cofactor.

The enzyme catalyses an N-acyl-L-homoserine lactone + H2O = an N-acyl-L-homoserine + H(+). This is N-acyl homoserine lactonase AttM from Agrobacterium fabrum (strain C58 / ATCC 33970) (Agrobacterium tumefaciens (strain C58)).